Here is a 390-residue protein sequence, read N- to C-terminus: Two-component response regulator ORR29 (390 aa).

Positions 13–130 (SAMVIDEDKC…TIKNLWQYVD (118 aa)) constitute a Response regulatory domain. The residue at position 65 (D65) is a 4-aspartylphosphate. Residues 169-226 (KKYYLMWTPHLQKKFLHALQILGKDASPKNIKKIMGVDNIDCRQIAAHLQKHRLRLTK) constitute a DNA-binding region (myb-like GARP). Disordered regions lie at residues 233 to 271 (FTTD…QPTE) and 303 to 339 (SKHS…SGDH). Positions 257 to 271 (NASTLQPRSNTQPTE) are enriched in polar residues.

Belongs to the ARR family. Type-B subfamily. In terms of processing, two-component system major event consists of a His-to-Asp phosphorelay between a sensor histidine kinase (HK) and a response regulator (RR). In plants, the His-to-Asp phosphorelay involves an additional intermediate named Histidine-containing phosphotransfer protein (HPt). This multistep phosphorelay consists of a His-Asp-His-Asp sequential transfer of a phosphate group between first a His and an Asp of the HK protein, followed by the transfer to a conserved His of the HPt protein and finally the transfer to an Asp in the receiver domain of the RR protein.

Its subcellular location is the nucleus. Transcriptional activator that binds specific DNA sequence. Functions as a response regulator involved in His-to-Asp phosphorelay signal transduction system. Phosphorylation of the Asp residue in the receiver domain activates the ability of the protein to promote the transcription of target genes. May directly activate some type-A response regulators in response to cytokinins. The sequence is that of Two-component response regulator ORR29 from Oryza sativa subsp. indica (Rice).